Consider the following 130-residue polypeptide: Small ribosomal subunit protein uS9 (130 aa).

Residues 99–110 are compositionally biased toward basic and acidic residues; that stretch reads KKAGFLTRDPRM. A disordered region spans residues 99-130; the sequence is KKAGFLTRDPRMKERKKYGLKKARRAPQFSKR. A compositionally biased stretch (basic residues) spans 111 to 130; it reads KERKKYGLKKARRAPQFSKR.

The protein belongs to the universal ribosomal protein uS9 family.

The chain is Small ribosomal subunit protein uS9 from Clostridium botulinum (strain Eklund 17B / Type B).